Consider the following 322-residue polypeptide: Anthranilate phosphoribosyltransferase (322 aa).

5-phospho-alpha-D-ribose 1-diphosphate is bound by residues Gly71, 74 to 75 (GD), Thr79, 81 to 84 (NVST), 99 to 107 (KFGNRSASG), and Ala111. Residue Gly71 coordinates anthranilate. A Mg(2+)-binding site is contributed by Ser83. Asn102 is a binding site for anthranilate. Arg157 is a binding site for anthranilate. Residues Asp215 and Glu216 each contribute to the Mg(2+) site.

The protein belongs to the anthranilate phosphoribosyltransferase family. As to quaternary structure, homodimer. Mg(2+) serves as cofactor.

The enzyme catalyses N-(5-phospho-beta-D-ribosyl)anthranilate + diphosphate = 5-phospho-alpha-D-ribose 1-diphosphate + anthranilate. The protein operates within amino-acid biosynthesis; L-tryptophan biosynthesis; L-tryptophan from chorismate: step 2/5. Catalyzes the transfer of the phosphoribosyl group of 5-phosphorylribose-1-pyrophosphate (PRPP) to anthranilate to yield N-(5'-phosphoribosyl)-anthranilate (PRA). This chain is Anthranilate phosphoribosyltransferase, found in Thermoplasma acidophilum (strain ATCC 25905 / DSM 1728 / JCM 9062 / NBRC 15155 / AMRC-C165).